The chain runs to 835 residues: Translation initiation factor IF-2 (835 aa).

The interval 1-243 (MSDTDGKKTL…RARQKAMGGA (243 aa)) is disordered. The segment covering 43 to 67 (VPKPGAGKPSAGGSSPAGDPSRRPA) has biased composition (low complexity). Composition is skewed to basic and acidic residues over residues 85–147 (KARE…EAKR), 157–166 (EAPKAERSAE), and 175–205 (EGGDNARRTTDRDREREQRQTRGKGRQDGRR). The tr-type G domain maps to 332 to 500 (PRPPVITIMG…AIALQAEILE (169 aa)). A G1 region spans residues 341 to 348 (GHVDHGKT). 341–348 (GHVDHGKT) contributes to the GTP binding site. The segment at 366 to 370 (GITQH) is G2. A G3 region spans residues 388–391 (DTPG). Residues 388 to 392 (DTPGH) and 442 to 445 (NKID) each bind GTP. A G4 region spans residues 442-445 (NKID). Positions 478–480 (SAK) are G5.

It belongs to the TRAFAC class translation factor GTPase superfamily. Classic translation factor GTPase family. IF-2 subfamily.

It is found in the cytoplasm. Functionally, one of the essential components for the initiation of protein synthesis. Protects formylmethionyl-tRNA from spontaneous hydrolysis and promotes its binding to the 30S ribosomal subunits. Also involved in the hydrolysis of GTP during the formation of the 70S ribosomal complex. This chain is Translation initiation factor IF-2, found in Ruegeria pomeroyi (strain ATCC 700808 / DSM 15171 / DSS-3) (Silicibacter pomeroyi).